The following is a 278-amino-acid chain: Large ribosomal subunit protein uL2 (278 aa).

Basic residues-rich tracts occupy residues 210-219 (RSRWLGKRPQ) and 252-263 (KKSRGIKTRNSK). The tract at residues 210–278 (RSRWLGKRPQ…LIIRHRKGNK (69 aa)) is disordered.

This sequence belongs to the universal ribosomal protein uL2 family. Part of the 50S ribosomal subunit. Forms a bridge to the 30S subunit in the 70S ribosome.

Its function is as follows. One of the primary rRNA binding proteins. Required for association of the 30S and 50S subunits to form the 70S ribosome, for tRNA binding and peptide bond formation. It has been suggested to have peptidyltransferase activity; this is somewhat controversial. Makes several contacts with the 16S rRNA in the 70S ribosome. The protein is Large ribosomal subunit protein uL2 of Lactobacillus johnsonii (strain CNCM I-12250 / La1 / NCC 533).